We begin with the raw amino-acid sequence, 393 residues long: 1-deoxy-D-xylulose 5-phosphate reductoisomerase (393 aa).

Residues Thr-13, Gly-14, Ser-15, Ile-16, and Asn-128 each contribute to the NADPH site. Residue Lys-129 coordinates 1-deoxy-D-xylulose 5-phosphate. An NADPH-binding site is contributed by Glu-130. Asp-154 serves as a coordination point for Mn(2+). 1-deoxy-D-xylulose 5-phosphate is bound by residues Ser-155, Glu-156, Ser-178, and His-201. Glu-156 lines the Mn(2+) pocket. An NADPH-binding site is contributed by Gly-207. 1-deoxy-D-xylulose 5-phosphate-binding residues include Ser-214, Asn-219, Lys-220, and Glu-223. Glu-223 is a Mn(2+) binding site.

This sequence belongs to the DXR family. Requires Mg(2+) as cofactor. The cofactor is Mn(2+).

It carries out the reaction 2-C-methyl-D-erythritol 4-phosphate + NADP(+) = 1-deoxy-D-xylulose 5-phosphate + NADPH + H(+). The protein operates within isoprenoid biosynthesis; isopentenyl diphosphate biosynthesis via DXP pathway; isopentenyl diphosphate from 1-deoxy-D-xylulose 5-phosphate: step 1/6. Functionally, catalyzes the NADPH-dependent rearrangement and reduction of 1-deoxy-D-xylulose-5-phosphate (DXP) to 2-C-methyl-D-erythritol 4-phosphate (MEP). This is 1-deoxy-D-xylulose 5-phosphate reductoisomerase from Acidithiobacillus ferrooxidans (strain ATCC 23270 / DSM 14882 / CIP 104768 / NCIMB 8455) (Ferrobacillus ferrooxidans (strain ATCC 23270)).